The chain runs to 449 residues: Glucose-6-phosphate isomerase (449 aa).

Residue E290 is the Proton donor of the active site. Active-site residues include H311 and K425.

The protein belongs to the GPI family.

It is found in the cytoplasm. The enzyme catalyses alpha-D-glucose 6-phosphate = beta-D-fructose 6-phosphate. The protein operates within carbohydrate biosynthesis; gluconeogenesis. Its pathway is carbohydrate degradation; glycolysis; D-glyceraldehyde 3-phosphate and glycerone phosphate from D-glucose: step 2/4. Functionally, catalyzes the reversible isomerization of glucose-6-phosphate to fructose-6-phosphate. This is Glucose-6-phosphate isomerase from Clostridioides difficile (strain 630) (Peptoclostridium difficile).